We begin with the raw amino-acid sequence, 391 residues long: Tumor susceptibility gene 101 protein (391 aa).

A2 bears the N-acetylalanine mark. A UEV domain is found at 2 to 145 (AVSESQLKKM…GEEPPVFSRP (144 aa)). Positions 159-163 (PPNTS) are interaction with CEP55. The disordered stretch occupies residues 195 to 222 (GPYPATTSSQYPSQPPVTTAGPSRDGTI). The span at 200–215 (TTSSQYPSQPPVTTAG) shows a compositional bias: polar residues. Residue T221 is modified to Phosphothreonine. The stretch at 238-317 (KLRWRMKEEM…NQSENNDIDE (80 aa)) forms a coiled coil. The PTAP motif motif lies at 321–324 (PTAP). Residues 323 to 391 (APLYKQILNL…RKTAGLSDLY (69 aa)) enclose the SB domain.

The protein belongs to the ubiquitin-conjugating enzyme family. UEV subfamily. As to quaternary structure, component of the ESCRT-I complex (endosomal sorting complex required for transport I) which consists of TSG101, VPS28, a VPS37 protein (VPS37A to -D) and MVB12A or MVB12B in a 1:1:1:1 stoichiometry. Interacts with VPS37A, VPS37B and VPS37C. Interacts with DMAP1. Interacts with ubiquitin. Interacts with AATF. Interacts with stathmin and GMCL. Component of an ESCRT-I complex (endosomal sorting complex required for transport I) which consists of TSG101, VPS28, VPS37A and UBAP1 in a 1:1:1:1 stoichiometry. Interacts with HGS; the interaction mediates the association with the ESCRT-0 complex. Interacts with GGA1 and GGA3. Interacts (via UEV domain) with PDCD6IP/AIP1. Interacts with VPS28, SNF8 and VPS36. Self-associates. Interacts with MVB12A; the association appears to be mediated by the TSG101-VPS37 binary subcomplex. Interacts with VPS37D. Interacts with LRSAM1. Interacts with CEP55; the interaction is required for cytokinesis. Interacts with PDCD6. Interacts with LITAF. Interacts with MGRN1. Interacts with ARRDC1; recruits TSG101 to the plasma membrane. Post-translationally, monoubiquitinated at multiple sites by LRSAM1 and by MGRN1. Ubiquitination inactivates it, possibly by regulating its shuttling between an active membrane-bound protein and an inactive soluble form. Ubiquitination by MGRN1 requires the presence of UBE2D1.

It localises to the cytoplasm. The protein localises to the early endosome membrane. Its subcellular location is the late endosome membrane. The protein resides in the cytoskeleton. It is found in the microtubule organizing center. It localises to the centrosome. The protein localises to the midbody. Its subcellular location is the midbody ring. The protein resides in the nucleus. Functionally, component of the ESCRT-I complex, a regulator of vesicular trafficking process. Binds to ubiquitinated cargo proteins and is required for the sorting of endocytic ubiquitinated cargos into multivesicular bodies (MVBs). Mediates the association between the ESCRT-0 and ESCRT-I complex. Required for completion of cytokinesis; the function requires CEP55. May be involved in cell growth and differentiation. Acts as a negative growth regulator. Required for the exosomal release of SDCBP, CD63 and syndecan. It may also play a role in the extracellular release of microvesicles that differ from the exosomes. In Rattus norvegicus (Rat), this protein is Tumor susceptibility gene 101 protein (Tsg101).